The following is a 973-amino-acid chain: Probable outer membrane protein pmp13 (973 aa).

Positions 1 to 24 are cleaved as a signal peptide; it reads MKTSIRKFLISTTLAPCFASTAFT. A compositionally biased stretch (polar residues) spans 284–293; sequence QNNTASPQNS. The tract at residues 284 to 303 is disordered; the sequence is QNNTASPQNSLPAPTPPPTP. The region spanning 691–973 is the Autotransporter domain; the sequence is EDVPGKQLSI…TLDIGSKLRF (283 aa).

This sequence belongs to the PMP outer membrane protein family.

Its subcellular location is the secreted. The protein localises to the cell wall. It localises to the cell outer membrane. The polypeptide is Probable outer membrane protein pmp13 (pmp13) (Chlamydia pneumoniae (Chlamydophila pneumoniae)).